The primary structure comprises 480 residues: F-box only protein 3 (480 aa).

One can recognise an F-box domain in the interval 10–56 (LLTLESLPTDPLLLILSFVDYRDLINCCYVSRRLSQLSTHDPLWRRH). The ApaG domain maps to 278-408 (VATTGDITVS…FHMACPTFRV (131 aa)). Residues 419 to 459 (EYEEMEEEAEEEEEEENDDSADMDESDESDEDENESDEGEG) show a composition bias toward acidic residues. The disordered stretch occupies residues 419–464 (EYEEMEEEAEEEEEEENDDSADMDESDESDEDENESDEGEGEERRR).

In terms of assembly, part of a SCF (SKP1-cullin-F-box) protein ligase complex SCF(FBXO3) consisting of FBXO3, SKP1, CUL1 and RBX1. Interacts with PML, interaction is direct and takes place either alone or within the SCF complex.

The protein resides in the nucleus. Its pathway is protein modification; protein ubiquitination. Its function is as follows. Substrate recognition component of the SCF (SKP1-CUL1-F-box protein)-type E3 ubiquitin ligase complex, SCF(FBXO3), which mediates the ubiquitination and subsequent proteasomal degradation of target proteins. Mediates the ubiquitination of HIPK2 and probably that of EP300, leading to rapid degradation by the proteasome. In the presence of PML, HIPK2 ubiquitination still occurs, but degradation is prevented. PML, HIPK2 and FBXO3 may act synergically to activate p53/TP53-dependent transactivation. The SCF(FBXO3) also acts as a regulator of inflammation by mediating ubiquitination and degradation of FBXL2 in response to lipopolysaccharide (LPS). The SCF(FBXO3) complex specifically recognizes FBXL2 phosphorylated at 'Thr-404' and promotes its ubiquitination. This is F-box only protein 3 (Fbxo3) from Rattus norvegicus (Rat).